The primary structure comprises 93 residues: UPF0358 protein BPUM_1375 (93 aa).

The protein belongs to the UPF0358 family.

This chain is UPF0358 protein BPUM_1375, found in Bacillus pumilus (strain SAFR-032).